A 157-amino-acid chain; its full sequence is Ribosome-binding factor A (157 aa).

Positions 127 to 157 (QQQFGSEDASVEDEVLGDDVADDADETEGKD) are disordered. The segment covering 135-157 (ASVEDEVLGDDVADDADETEGKD) has biased composition (acidic residues).

It belongs to the RbfA family. In terms of assembly, monomer. Binds 30S ribosomal subunits, but not 50S ribosomal subunits or 70S ribosomes.

It localises to the cytoplasm. Functionally, one of several proteins that assist in the late maturation steps of the functional core of the 30S ribosomal subunit. Associates with free 30S ribosomal subunits (but not with 30S subunits that are part of 70S ribosomes or polysomes). Required for efficient processing of 16S rRNA. May interact with the 5'-terminal helix region of 16S rRNA. This Shewanella baltica (strain OS155 / ATCC BAA-1091) protein is Ribosome-binding factor A.